A 207-amino-acid chain; its full sequence is Recombination protein RecR (207 aa).

The C4-type zinc-finger motif lies at 60 to 75 (CRHCHNISDSDVCTIC). The region spanning 83–178 (STLCVVENIR…RVSVIARGIA (96 aa)) is the Toprim domain.

Belongs to the RecR family.

Its function is as follows. May play a role in DNA repair. It seems to be involved in an RecBC-independent recombinational process of DNA repair. It may act with RecF and RecO. This is Recombination protein RecR from Porphyromonas gingivalis (strain ATCC BAA-308 / W83).